A 377-amino-acid polypeptide reads, in one-letter code: MKNNIITLTQSLIQRPSISPDDQGCQQLIAERLQAVGFKLEWLPFGDTLNLWATHGEGKCIAFAGHTDVVPIGNESQWTYLPFEARIVENMLYGRGAADMKGALAAMVIAAETFVKHLPNHQGKIALLITSDEEAAATNGTVKVVETLIKRNEKIDYCVVGEPSSATQFGDIIKNGRRGSITGNLYIQGVQGHVAYPHLADNPVHNALKFLDELTHYQWDKGNEFFPPTSLQIANIHAGTGSNNVIPGELYVQFNLRYCTEVTDEIIKTKVTEMLEKHKLTYRIDWNLSGKPFLTPQGKLVNATLEAVEKFTQIRPHLDTGGGTSDARFIATMGAEVVEFGPLNQTIHKVNECVNIDDLAKCGEIYYHILEKLFNEQ.

His66 provides a ligand contact to Zn(2+). Residue Asp68 is part of the active site. Position 99 (Asp99) interacts with Zn(2+). Glu133 acts as the Proton acceptor in catalysis. The Zn(2+) site is built by Glu134, Glu162, and His348.

This sequence belongs to the peptidase M20A family. DapE subfamily. In terms of assembly, homodimer. Zn(2+) serves as cofactor. The cofactor is Co(2+).

It carries out the reaction N-succinyl-(2S,6S)-2,6-diaminopimelate + H2O = (2S,6S)-2,6-diaminopimelate + succinate. The protein operates within amino-acid biosynthesis; L-lysine biosynthesis via DAP pathway; LL-2,6-diaminopimelate from (S)-tetrahydrodipicolinate (succinylase route): step 3/3. Its function is as follows. Catalyzes the hydrolysis of N-succinyl-L,L-diaminopimelic acid (SDAP), forming succinate and LL-2,6-diaminopimelate (DAP), an intermediate involved in the bacterial biosynthesis of lysine and meso-diaminopimelic acid, an essential component of bacterial cell walls. The polypeptide is Succinyl-diaminopimelate desuccinylase (Histophilus somni (strain 129Pt) (Haemophilus somnus)).